A 55-amino-acid chain; its full sequence is MPQLNPNPWFTILIFTWAVFLTILPNKVTSHKMPNELLTKDPSNLLTEIWYWPWH.

Residues 4-24 (LNPNPWFTILIFTWAVFLTIL) traverse the membrane as a helical segment.

Belongs to the ATPase protein 8 family. F-type ATPases have 2 components, CF(1) - the catalytic core - and CF(0) - the membrane proton channel.

The protein resides in the mitochondrion membrane. Functionally, mitochondrial membrane ATP synthase (F(1)F(0) ATP synthase or Complex V) produces ATP from ADP in the presence of a proton gradient across the membrane which is generated by electron transport complexes of the respiratory chain. F-type ATPases consist of two structural domains, F(1) - containing the extramembraneous catalytic core and F(0) - containing the membrane proton channel, linked together by a central stalk and a peripheral stalk. During catalysis, ATP synthesis in the catalytic domain of F(1) is coupled via a rotary mechanism of the central stalk subunits to proton translocation. Part of the complex F(0) domain. Minor subunit located with subunit a in the membrane. This chain is ATP synthase protein 8 (mt-atp8), found in Polypterus ornatipinnis (Ornate bichir).